Reading from the N-terminus, the 416-residue chain is UDP-N-acetylglucosamine 1-carboxyvinyltransferase (416 aa).

22 to 23 is a phosphoenolpyruvate binding site; that stretch reads KN. R92 contacts UDP-N-acetyl-alpha-D-glucosamine. Residue C116 is the Proton donor of the active site. At C116 the chain carries 2-(S-cysteinyl)pyruvic acid O-phosphothioketal. Residues 121–125, D304, and I326 each bind UDP-N-acetyl-alpha-D-glucosamine; that span reads RPVDQ.

Belongs to the EPSP synthase family. MurA subfamily.

Its subcellular location is the cytoplasm. It catalyses the reaction phosphoenolpyruvate + UDP-N-acetyl-alpha-D-glucosamine = UDP-N-acetyl-3-O-(1-carboxyvinyl)-alpha-D-glucosamine + phosphate. Its pathway is cell wall biogenesis; peptidoglycan biosynthesis. Its function is as follows. Cell wall formation. Adds enolpyruvyl to UDP-N-acetylglucosamine. The polypeptide is UDP-N-acetylglucosamine 1-carboxyvinyltransferase (Cupriavidus pinatubonensis (strain JMP 134 / LMG 1197) (Cupriavidus necator (strain JMP 134))).